A 134-amino-acid polypeptide reads, in one-letter code: Profilin-4 (134 aa).

A disulfide bridge links Cys-13 with Cys-118. The short motif at 84–100 (AVIRGKKGSGGITIKKT) is the Involved in PIP2 interaction element. Residue Thr-114 is modified to Phosphothreonine.

This sequence belongs to the profilin family. As to quaternary structure, occurs in many kinds of cells as a complex with monomeric actin in a 1:1 ratio. Phosphorylated by MAP kinases.

The protein resides in the cytoplasm. The protein localises to the cytoskeleton. Binds to actin and affects the structure of the cytoskeleton. At high concentrations, profilin prevents the polymerization of actin, whereas it enhances it at low concentrations. The sequence is that of Profilin-4 from Olea europaea (Common olive).